The following is a 772-amino-acid chain: Cellulosomal-scaffolding protein B (772 aa).

The 80-residue stretch at 1–80 (DPSKSFDSAI…TTFVAGGVNL (80 aa)) folds into the Cohesin 1 domain. The segment at 81-93 (GSSVPTTQPNVPS) is linker (Pro/Thr-rich). The region spanning 94–240 (DGVVVEIGKV…VNVGNATPTK (147 aa)) is the Cohesin 2 domain. A compositionally biased stretch (low complexity) spans 235–276 (NATPTKGATPTNTATPTKSATATPPGHSVPTNTPTNTPANTP). Disordered regions lie at residues 235–277 (NATP…NTPV) and 438–464 (VVPSTQPVTTPPATTKPPATTIPPSDD). The segment at 241–272 (GATPTNTATPTKSATATPPGHSVPTNTPTNTP) is linker (Pro/Thr-rich). The CBM3 domain occupies 277 to 435 (VSGNLKVEFY…GVLVWGKEPG (159 aa)). A compositionally biased stretch (low complexity) spans 438–461 (VVPSTQPVTTPPATTKPPATTIPP). Residues 440-461 (PSTQPVTTPPATTKPPATTIPP) are linker (Pro/Thr-rich). The region spanning 462–607 (SDDPNAIKIK…ETDLINGGVL (146 aa)) is the Cohesin 3 domain. In terms of domain architecture, Dockerin spans 704 to 771 (IMMWVGDIVK…FGATSSDYDA (68 aa)).

In terms of processing, O-glycosylated on most but not all Thr residues of the linker units.

Its subcellular location is the secreted. Acts as a scaffolding protein in the cellulosome. It promotes binding of cellulose to the catalytic domains of the cellulolytic enzymes probably through the binding of the nine repeated domains with dockerin domains present in catalytic subunits of the cellulosome. The sequence is that of Cellulosomal-scaffolding protein B (cipB) from Acetivibrio thermocellus (Hungateiclostridium thermocellum).